A 280-amino-acid polypeptide reads, in one-letter code: 4-deoxy-L-threo-5-hexosulose-uronate ketol-isomerase (280 aa).

H198, H200, E205, and H247 together coordinate Zn(2+).

It belongs to the KduI family. Zn(2+) is required as a cofactor.

The enzyme catalyses 5-dehydro-4-deoxy-D-glucuronate = 3-deoxy-D-glycero-2,5-hexodiulosonate. It functions in the pathway glycan metabolism; pectin degradation; 2-dehydro-3-deoxy-D-gluconate from pectin: step 4/5. Functionally, catalyzes the isomerization of 5-dehydro-4-deoxy-D-glucuronate to 3-deoxy-D-glycero-2,5-hexodiulosonate. The sequence is that of 4-deoxy-L-threo-5-hexosulose-uronate ketol-isomerase from Bacteroides fragilis (strain YCH46).